The following is a 551-amino-acid chain: Membrane protein insertase YidC (551 aa).

A helical transmembrane segment spans residues alanine 3–glycine 23. Positions asparagine 33–asparagine 55 are disordered. 3 consecutive transmembrane segments (helical) span residues leucine 361–tyrosine 381, leucine 431–leucine 451, and valine 504–valine 524.

The protein belongs to the OXA1/ALB3/YidC family. Type 1 subfamily. As to quaternary structure, interacts with the Sec translocase complex via SecD. Specifically interacts with transmembrane segments of nascent integral membrane proteins during membrane integration.

It is found in the cell inner membrane. Its function is as follows. Required for the insertion and/or proper folding and/or complex formation of integral membrane proteins into the membrane. Involved in integration of membrane proteins that insert both dependently and independently of the Sec translocase complex, as well as at least some lipoproteins. Aids folding of multispanning membrane proteins. This Francisella tularensis subsp. holarctica (strain OSU18) protein is Membrane protein insertase YidC.